Reading from the N-terminus, the 85-residue chain is Small ribosomal subunit protein uS17 (85 aa).

Belongs to the universal ribosomal protein uS17 family. As to quaternary structure, part of the 30S ribosomal subunit.

Functionally, one of the primary rRNA binding proteins, it binds specifically to the 5'-end of 16S ribosomal RNA. The sequence is that of Small ribosomal subunit protein uS17 from Trichlorobacter lovleyi (strain ATCC BAA-1151 / DSM 17278 / SZ) (Geobacter lovleyi).